Here is a 132-residue protein sequence, read N- to C-terminus: Translation initiation factor 5A (132 aa).

Lysine 36 carries the hypusine modification.

The protein belongs to the eIF-5A family.

It localises to the cytoplasm. Functions by promoting the formation of the first peptide bond. The polypeptide is Translation initiation factor 5A (Methanosphaera stadtmanae (strain ATCC 43021 / DSM 3091 / JCM 11832 / MCB-3)).